Here is a 611-residue protein sequence, read N- to C-terminus: Zinc metalloproteinase nas-31 (611 aa).

An N-terminal signal peptide occupies residues 1–17; sequence MILQLLFYSLFTHLAVS. The propeptide occupies 18-158; the sequence is QIDVNQALNQ…TVSTASRARR (141 aa). Residues Asn53 and Asn67 are each glycosylated (N-linked (GlcNAc...) asparagine). The segment covering 82 to 95 has biased composition (polar residues); sequence NAGTNQENGATEQQ. A disordered region spans residues 82-103; it reads NAGTNQENGATEQQKPLREKPR. The Peptidase M12A domain occupies 159 to 354; that stretch reads QAYRDRYYPS…SMMNEHYKCK (196 aa). The N-linked (GlcNAc...) asparagine glycan is linked to Asn200. 9 disulfide bridges follow: Cys203–Cys353, Cys224–Cys243, Cys357–Cys376, Cys379–Cys390, Cys397–Cys428, Cys455–Cys476, Cys532–Cys564, Cys539–Cys557, and Cys548–Cys561. Position 251 (His251) interacts with Zn(2+). Glu252 is a catalytic residue. Residues His255 and His261 each contribute to the Zn(2+) site. Residues 340 to 396 form the EGF-like domain; the sequence is GFYDISMMNEHYKCKELCPAASSAQCKNGGFPSPRNCAICICPSGYGGILCDQRPPG. The CUB domain maps to 397–516; that stretch reads CGDSVTATTT…LEYRAVTPSV (120 aa). Asn424 is a glycosylation site (N-linked (GlcNAc...) asparagine). One can recognise a ShKT domain in the interval 532–564; it reads CQDLHPNCDFYKFFGMCRSKKIRSNCKFTCHDC.

Zn(2+) serves as cofactor. In terms of tissue distribution, expressed in excretory cell and in amphid and phasmid sheath glia.

The protein resides in the secreted. In terms of biological role, metalloprotease. This is Zinc metalloproteinase nas-31 (nas-31) from Caenorhabditis elegans.